Reading from the N-terminus, the 495-residue chain is Glutamate--tRNA ligase (495 aa).

The 'HIGH' region signature appears at 12-22; the sequence is PSPTGHLHIGN. The short motif at 259–263 is the 'KMSKS' region element; sequence KLSKR. Lys262 serves as a coordination point for ATP.

The protein belongs to the class-I aminoacyl-tRNA synthetase family. Glutamate--tRNA ligase type 1 subfamily. Monomer.

It is found in the cytoplasm. The catalysed reaction is tRNA(Glu) + L-glutamate + ATP = L-glutamyl-tRNA(Glu) + AMP + diphosphate. Its function is as follows. Catalyzes the attachment of glutamate to tRNA(Glu) in a two-step reaction: glutamate is first activated by ATP to form Glu-AMP and then transferred to the acceptor end of tRNA(Glu). This Latilactobacillus sakei subsp. sakei (strain 23K) (Lactobacillus sakei subsp. sakei) protein is Glutamate--tRNA ligase.